A 480-amino-acid chain; its full sequence is Sestrin-2 (480 aa).

Residue methionine 1 is modified to N-acetylmethionine. Positions proline 20–serine 45 are disordered. The tract at residues glycine 66–serine 239 is N-terminal domain; mediates the alkylhydroperoxide reductase activity. Cysteine 125 serves as the catalytic Cysteine sulfenic acid (-SOH) intermediate. Residue lysine 175 forms a Glycyl lysine isopeptide (Lys-Gly) (interchain with G-Cter in ubiquitin) linkage. The interval alanine 222–phenylalanine 252 is disordered. A Phosphoserine modification is found at serine 249. The segment at proline 308–threonine 480 is C-terminal domain; mediates TORC1 regulation. L-leucine-binding positions include threonine 374–threonine 377, threonine 386, and glutamate 451.

The protein belongs to the sestrin family. As to quaternary structure, interacts with the GATOR2 complex which is composed of MIOS, SEC13, SEH1L, WDR24 and WDR59; the interaction is negatively regulated by leucine. Conveys leucine availability via direct interaction with SEH1L and WDR24 components of the GATOR2 complex. Interacts with RRAGA, RRAGB, RRAGC and RRAGD; may function as a guanine nucleotide dissociation inhibitor for RRAGs and regulate them. May interact with the TORC2 complex. Interacts with KEAP1, RBX1, SQSTM and ULK1; to regulate the degradation of KEAP1. May also associate with the complex composed of TSC1, TSC2 and the AMP-responsive protein kinase/AMPK to regulate TORC1 signaling. May interact with PRDX1. In terms of processing, phosphorylated by ULK1 at multiple sites. Ubiquitinated at Lys-175 by RNF167 via 'Lys-63'-linked polyubiquitination in response to leucine deprivation: ubiquitination promotes SESN2-interaction with the GATOR2 complex, leading to inhibit the TORC1 signaling pathway. Deubiquitinated at Lys-175 by STAMBPL1, promoting the TORC1 signaling pathway. Ubiquitinated by RNF186; ubiquitination mediates proteasomal degradation.

It localises to the cytoplasm. The enzyme catalyses a hydroperoxide + L-cysteinyl-[protein] = S-hydroxy-L-cysteinyl-[protein] + an alcohol. Its function is as follows. Functions as an intracellular leucine sensor that negatively regulates the mTORC1 signaling pathway through the GATOR complex. In absence of leucine, binds the GATOR subcomplex GATOR2 and prevents mTORC1 signaling. Binding of leucine to SESN2 disrupts its interaction with GATOR2 thereby activating the TORC1 signaling pathway. This stress-inducible metabolic regulator also plays a role in protection against oxidative and genotoxic stresses. May negatively regulate protein translation in response to endoplasmic reticulum stress, via mTORC1. May positively regulate the transcription by NFE2L2 of genes involved in the response to oxidative stress by facilitating the SQSTM1-mediated autophagic degradation of KEAP1. May also mediate TP53 inhibition of TORC1 signaling upon genotoxic stress. Moreover, may prevent the accumulation of reactive oxygen species (ROS) through the alkylhydroperoxide reductase activity born by the N-terminal domain of the protein. Was originally reported to contribute to oxidative stress resistance by reducing PRDX1. However, this could not be confirmed. In Pongo abelii (Sumatran orangutan), this protein is Sestrin-2.